A 332-amino-acid polypeptide reads, in one-letter code: Capsular polysaccharide phosphotransferase WcwK (332 aa).

It belongs to the stealth family.

In Streptococcus pneumoniae, this protein is Capsular polysaccharide phosphotransferase WcwK (wcwK).